A 629-amino-acid chain; its full sequence is tRNA uridine 5-carboxymethylaminomethyl modification enzyme MnmG (629 aa).

An FAD-binding site is contributed by 13-18; sequence GGGHAG. 273 to 287 contacts NAD(+); the sequence is GPRYCPSIEDKIVRF.

Belongs to the MnmG family. In terms of assembly, homodimer. Heterotetramer of two MnmE and two MnmG subunits. It depends on FAD as a cofactor.

It is found in the cytoplasm. Functionally, NAD-binding protein involved in the addition of a carboxymethylaminomethyl (cmnm) group at the wobble position (U34) of certain tRNAs, forming tRNA-cmnm(5)s(2)U34. This is tRNA uridine 5-carboxymethylaminomethyl modification enzyme MnmG from Pseudoalteromonas translucida (strain TAC 125).